The sequence spans 390 residues: Pyruvate dehydrogenase E1 component subunit alpha, somatic form, mitochondrial (390 aa).

The N-terminal 29 residues, 1-29 (MRKMLAAVSRVLSGASQKPASRVLVASRN), are a transit peptide targeting the mitochondrion. The residue at position 63 (Lys63) is an N6-acetyllysine; alternate. Residue Lys63 is modified to N6-succinyllysine; alternate. Residues His92, Tyr118, Arg119, Ala157, Gly165, Val167, Asp196, Gly197, Ala198, Asn225, and Tyr227 each coordinate pyruvate. 2 residues coordinate thiamine diphosphate: Tyr118 and Arg119. Gly165, Val167, Asp196, Gly197, Ala198, and Asn225 together coordinate thiamine diphosphate. Asp196 is a binding site for Mg(2+). 2 residues coordinate Mg(2+): Asn225 and Tyr227. Ser232 is modified (phosphoserine; by PDK1). Lys244 carries the post-translational modification N6-acetyllysine; alternate. The residue at position 244 (Lys244) is an N6-succinyllysine; alternate. The residue at position 277 (Lys277) is an N6-succinyllysine. His292 provides a ligand contact to thiamine diphosphate. The residue at position 293 (Ser293) is a Phosphoserine; by PDK1, PDK2, PDK3 and PDK4. Residue Ser295 is modified to Phosphoserine. At Ser300 the chain carries Phosphoserine; by PDK1, PDK2, PDK3 and PDK4. Tyr301 bears the Phosphotyrosine mark. An N6-acetyllysine; alternate modification is found at Lys313. N6-succinyllysine; alternate is present on Lys313. N6-acetyllysine occurs at positions 321 and 336. Lys385 carries the N6-succinyllysine modification.

As to quaternary structure, heterotetramer of two PDHA1 and two PDHB subunits. The heterotetramer interacts with DLAT, and is part of the multimeric pyruvate dehydrogenase complex that contains multiple copies of pyruvate dehydrogenase (E1), dihydrolipoamide acetyltransferase (DLAT, E2) and lipoamide dehydrogenase (DLD, E3). These subunits are bound to an inner core composed of about 48 DLAT and 12 PDHX molecules. Thiamine diphosphate is required as a cofactor. The cofactor is Mg(2+). Post-translationally, phosphorylation at Ser-232, Ser-293 and Ser-300 by PDK family kinases inactivates the enzyme; for this phosphorylation at a single site is sufficient. Phosphorylation at Ser-293 interferes with access to active site, and thereby inactivates the enzyme. Dephosphorylation at all three sites, i.e. at Ser-232, Ser-293 and Ser-300, is required for reactivation. Acetylation alters the phosphorylation pattern. Deacetylated by SIRT3.

It localises to the mitochondrion matrix. The catalysed reaction is N(6)-[(R)-lipoyl]-L-lysyl-[protein] + pyruvate + H(+) = N(6)-[(R)-S(8)-acetyldihydrolipoyl]-L-lysyl-[protein] + CO2. With respect to regulation, pyruvate dehydrogenase activity is inhibited by phosphorylation of PDHA1; it is reactivated by dephosphorylation. Its function is as follows. The pyruvate dehydrogenase complex catalyzes the overall conversion of pyruvate to acetyl-CoA and CO(2), and thereby links the glycolytic pathway to the tricarboxylic cycle. The sequence is that of Pyruvate dehydrogenase E1 component subunit alpha, somatic form, mitochondrial (PDHA1) from Pan troglodytes (Chimpanzee).